The primary structure comprises 380 residues: Protein kinase ORF15 (380 aa).

Positions 93 to 371 constitute a Protein kinase domain; it reads FIPVKVAGCL…LLIAQLTKFI (279 aa). Lysine 118 lines the ATP pocket. Residue aspartate 217 is the Proton acceptor of the active site.

It belongs to the protein kinase superfamily. Ser/Thr protein kinase family.

The enzyme catalyses L-seryl-[protein] + ATP = O-phospho-L-seryl-[protein] + ADP + H(+). It carries out the reaction L-threonyl-[protein] + ATP = O-phospho-L-threonyl-[protein] + ADP + H(+). The sequence is that of Protein kinase ORF15 (ORF15) from Ictalurid herpesvirus 1 (strain Auburn) (IcHV-1).